We begin with the raw amino-acid sequence, 785 residues long: Neutral ceramidase (785 aa).

The signal sequence occupies residues 1–35; sequence MEASSWLCYQARGFGSSRVWLWLLLALVLLNCSLV. Asn-31 is a glycosylation site (N-linked (GlcNAc...) asparagine). Ser-359 functions as the Nucleophile in the catalytic mechanism. Residues Asn-377, Asn-675, and Asn-685 are each glycosylated (N-linked (GlcNAc...) asparagine).

It belongs to the neutral ceramidase family. In terms of tissue distribution, expressed in seedlings, with higher levels in roots than in shoots.

It is found in the secreted. The protein resides in the endoplasmic reticulum. Its subcellular location is the golgi apparatus. It carries out the reaction an N-acylsphing-4-enine + H2O = sphing-4-enine + a fatty acid. Enhanced activity in the presence of calcium, magnesium, manganese and zinc ions, but inhibited activity in the presence of iron ion. Hydrolyzes the sphingolipid ceramide into sphingosine and free fatty acid. Uses ceramide instead of phytoceramide as substrate. This is Neutral ceramidase from Oryza sativa subsp. japonica (Rice).